Here is a 423-residue protein sequence, read N- to C-terminus: Histidine--tRNA ligase (423 aa).

Belongs to the class-II aminoacyl-tRNA synthetase family. As to quaternary structure, homodimer.

It is found in the cytoplasm. The enzyme catalyses tRNA(His) + L-histidine + ATP = L-histidyl-tRNA(His) + AMP + diphosphate + H(+). The sequence is that of Histidine--tRNA ligase from Desulfosudis oleivorans (strain DSM 6200 / JCM 39069 / Hxd3) (Desulfococcus oleovorans).